We begin with the raw amino-acid sequence, 838 residues long: Rho GTPase-activating protein 12 (838 aa).

In terms of domain architecture, SH3 spans 10–72 (AGQAYIEVEY…PAQYVKEVTR (63 aa)). Polar residues-rich tracts occupy residues 155 to 172 (GKFNSDSHSPKVSSQNRT) and 189 to 198 (TSFSQEQSCD). The tract at residues 155–239 (GKFNSDSHSP…PPNQGRPDSP (85 aa)) is disordered. Phosphoserine is present on Ser-163. 3 positions are modified to phosphoserine: Ser-199, Ser-211, and Ser-213. Phosphothreonine occurs at positions 228 and 229. Ser-238 is subject to Phosphoserine. At Tyr-241 the chain carries Phosphotyrosine. Residues 263-296 (IQVNGEWETHKDSSGRCYYYNRTTQERTWKPPRW) form the WW 1 domain. The span at 291 to 302 (WKPPRWARDVST) shows a compositional bias: basic and acidic residues. Residues 291-346 (WKPPRWARDVSTSRDFQSPGEQEPLSSEENYHSSCFSQSDSQCGSPPRGWSEELDE) form a disordered region. Positions 303 to 334 (SRDFQSPGEQEPLSSEENYHSSCFSQSDSQCG) are enriched in polar residues. The region spanning 355-388 (DYTKEKWLKHVDDQGRQYYYSADGSRSEWELPKY) is the WW 2 domain. The disordered stretch occupies residues 425–456 (DSNDKDSPTTTKLCLPENESPPTSSKHQDPGQ). The PH domain occupies 466 to 567 (KITENGKKVR…WFKVLSSTIN (102 aa)). The span at 572–582 (EADEAAEEETP) shows a compositional bias: acidic residues. Residues 572–620 (EADEAAEEETPDSPGVEKHDKEKDQKELKKLRSMKGSSMDSSEQKKTKK) are disordered. At Ser-584 the chain carries Phosphoserine. Residues 586–601 (GVEKHDKEKDQKELKK) are compositionally biased toward basic and acidic residues. The Rho-GAP domain occupies 648 to 836 (SNLANLCQRE…LILLELSTVF (189 aa)).

Functionally, GTPase activator for the Rho-type GTPases by converting them to an inactive GDP-bound state. This is Rho GTPase-activating protein 12 (Arhgap12) from Mus musculus (Mouse).